Reading from the N-terminus, the 154-residue chain is NADPH-dependent 7-cyano-7-deazaguanine reductase (154 aa).

The Thioimide intermediate role is filled by cysteine 52. Aspartate 59 functions as the Proton donor in the catalytic mechanism. Residues 74–76 (VES) and 93–94 (HE) each bind substrate.

This sequence belongs to the GTP cyclohydrolase I family. QueF type 1 subfamily.

Its subcellular location is the cytoplasm. The enzyme catalyses 7-aminomethyl-7-carbaguanine + 2 NADP(+) = 7-cyano-7-deazaguanine + 2 NADPH + 3 H(+). It functions in the pathway tRNA modification; tRNA-queuosine biosynthesis. Functionally, catalyzes the NADPH-dependent reduction of 7-cyano-7-deazaguanine (preQ0) to 7-aminomethyl-7-deazaguanine (preQ1). The sequence is that of NADPH-dependent 7-cyano-7-deazaguanine reductase from Ruegeria sp. (strain TM1040) (Silicibacter sp.).